The chain runs to 153 residues: D-aminoacyl-tRNA deacylase (153 aa).

Residues 137–138 (GP) carry the Gly-cisPro motif, important for rejection of L-amino acids motif.

Belongs to the DTD family. In terms of assembly, homodimer.

It localises to the cytoplasm. It carries out the reaction glycyl-tRNA(Ala) + H2O = tRNA(Ala) + glycine + H(+). The catalysed reaction is a D-aminoacyl-tRNA + H2O = a tRNA + a D-alpha-amino acid + H(+). Its function is as follows. An aminoacyl-tRNA editing enzyme that deacylates mischarged D-aminoacyl-tRNAs. Also deacylates mischarged glycyl-tRNA(Ala), protecting cells against glycine mischarging by AlaRS. Acts via tRNA-based rather than protein-based catalysis; rejects L-amino acids rather than detecting D-amino acids in the active site. By recycling D-aminoacyl-tRNA to D-amino acids and free tRNA molecules, this enzyme counteracts the toxicity associated with the formation of D-aminoacyl-tRNA entities in vivo and helps enforce protein L-homochirality. This is D-aminoacyl-tRNA deacylase from Myxococcus xanthus (strain DK1622).